Here is a 228-residue protein sequence, read N- to C-terminus: Urease accessory protein UreF (228 aa).

Belongs to the UreF family. As to quaternary structure, ureD, UreF and UreG form a complex that acts as a GTP-hydrolysis-dependent molecular chaperone, activating the urease apoprotein by helping to assemble the nickel containing metallocenter of UreC. The UreE protein probably delivers the nickel.

Its subcellular location is the cytoplasm. Required for maturation of urease via the functional incorporation of the urease nickel metallocenter. This Dechloromonas aromatica (strain RCB) protein is Urease accessory protein UreF.